Reading from the N-terminus, the 136-residue chain is Large ribosomal subunit protein uL16c (136 aa).

Residues 1–20 (MLSPKRTRFRKQHRGRMKGK) form a disordered region.

Belongs to the universal ribosomal protein uL16 family. As to quaternary structure, part of the 50S ribosomal subunit.

It localises to the plastid. The protein localises to the chloroplast. This chain is Large ribosomal subunit protein uL16c, found in Lolium perenne (Perennial ryegrass).